We begin with the raw amino-acid sequence, 346 residues long: tRNA N6-adenosine threonylcarbamoyltransferase (346 aa).

The Fe cation site is built by histidine 111 and histidine 115. Substrate is bound by residues 134–138 (LVSGG), aspartate 167, glycine 180, and asparagine 279. Residue aspartate 307 coordinates Fe cation.

It belongs to the KAE1 / TsaD family. It depends on Fe(2+) as a cofactor.

The protein resides in the cytoplasm. It carries out the reaction L-threonylcarbamoyladenylate + adenosine(37) in tRNA = N(6)-L-threonylcarbamoyladenosine(37) in tRNA + AMP + H(+). Its function is as follows. Required for the formation of a threonylcarbamoyl group on adenosine at position 37 (t(6)A37) in tRNAs that read codons beginning with adenine. Is involved in the transfer of the threonylcarbamoyl moiety of threonylcarbamoyl-AMP (TC-AMP) to the N6 group of A37, together with TsaE and TsaB. TsaD likely plays a direct catalytic role in this reaction. This Burkholderia cenocepacia (strain HI2424) protein is tRNA N6-adenosine threonylcarbamoyltransferase.